A 552-amino-acid chain; its full sequence is Phosphoglucomutase (552 aa).

Catalysis depends on serine 143, which acts as the Phosphoserine intermediate. 4 residues coordinate Mg(2+): serine 143, aspartate 295, aspartate 297, and aspartate 299.

Belongs to the phosphohexose mutase family. The cofactor is Mg(2+).

It catalyses the reaction alpha-D-glucose 1-phosphate = alpha-D-glucose 6-phosphate. It functions in the pathway glycolipid metabolism; diglucosyl-diacylglycerol biosynthesis. Functionally, catalyzes the interconversion between glucose-6-phosphate and alpha-glucose-1-phosphate. This is the first step in the biosynthesis of diglucosyl-diacylglycerol (Glc2-DAG), i.e. the predominant glycolipid found in the S.aureus membrane, which is also used as a membrane anchor for lipoteichoic acid (LTA). In Staphylococcus aureus (strain Mu50 / ATCC 700699), this protein is Phosphoglucomutase (pgcA).